Reading from the N-terminus, the 409-residue chain is Phosphopentomutase (409 aa).

Residues Asp10, Asp308, His313, Asp349, His350, and His361 each coordinate Mn(2+).

This sequence belongs to the phosphopentomutase family. Mn(2+) serves as cofactor.

The protein localises to the cytoplasm. The catalysed reaction is 2-deoxy-alpha-D-ribose 1-phosphate = 2-deoxy-D-ribose 5-phosphate. It carries out the reaction alpha-D-ribose 1-phosphate = D-ribose 5-phosphate. The protein operates within carbohydrate degradation; 2-deoxy-D-ribose 1-phosphate degradation; D-glyceraldehyde 3-phosphate and acetaldehyde from 2-deoxy-alpha-D-ribose 1-phosphate: step 1/2. Functionally, isomerase that catalyzes the conversion of deoxy-ribose 1-phosphate (dRib-1-P) and ribose 1-phosphate (Rib-1-P) to deoxy-ribose 5-phosphate (dRib-5-P) and ribose 5-phosphate (Rib-5-P), respectively. The chain is Phosphopentomutase from Buchnera aphidicola subsp. Schizaphis graminum (strain Sg).